We begin with the raw amino-acid sequence, 833 residues long: Transcription factor MBP1 (833 aa).

The region spanning 5–111 (IYSARYSGVD…FTQTDGSASP (107 aa)) is the HTH APSES-type domain. Positions 36–57 (ATHILKAANFAKAKRTRILEKE) form a DNA-binding region, H-T-H motif. Disordered regions lie at residues 104 to 223 (QTDG…QSPT) and 280 to 329 (QQSS…SPII). Residue serine 110 is modified to Phosphoserine. Residues 115 to 129 (PKHHHASKVDRKKAI) show a composition bias toward basic residues. Positions 139 to 149 (ETKRNNKKAEE) are enriched in basic and acidic residues. Polar residues predominate over residues 201-223 (PNSSISTTQLPSIRSTMGPQSPT). Residues 280 to 307 (QQSSLIQTQQTESMATSVSSSPSLPTSP) are compositionally biased toward low complexity. Residue threonine 325 is modified to Phosphothreonine. Phosphoserine is present on residues serine 326 and serine 330. ANK repeat units follow at residues 394–423 (ELHTAFHWACSMGNLPIAEALYEAGTSIRS) and 512–541 (NGDTALHIASKNGDVVFFNTLVKMGALTTI). Serine 827 carries the phosphoserine modification.

In terms of assembly, component of the transcription complex MCB-binding factor (MBF) composed of SWI6 and MBP1. Interacts with MSA1.

The protein resides in the nucleus. In terms of biological role, binds to MCB elements (Mlu I cell cycle box) found in the promoter of most DNA synthesis genes. Transcriptional activation by MBF has an important role in the transition from G1 to S phase. It may have a dual role in that it behaves as an activator of transcription at the G1-S boundary and as a repressor during other stages of the cell cycle. The sequence is that of Transcription factor MBP1 (MBP1) from Saccharomyces cerevisiae (strain ATCC 204508 / S288c) (Baker's yeast).